A 262-amino-acid chain; its full sequence is Tetratricopeptide repeat protein 33 (262 aa).

The segment at 17-63 is disordered; that stretch reads ATSQQFEAEAADEKDAAENEDGNWLQASKRRKETLQEGCKQRSQQLK. 3 TPR repeats span residues 59 to 92, 93 to 126, and 127 to 160; these read SQQL…TPGD, ATLY…NPHS, and WEAW…YPMN. At Ser-197 the chain carries Phosphoserine.

This is Tetratricopeptide repeat protein 33 (Ttc33) from Mus musculus (Mouse).